The sequence spans 174 residues: Large ribosomal subunit protein uL13 (174 aa).

2 disordered regions span residues 1 to 22 (MAFP…AKSP) and 153 to 174 (GETH…LEVK).

The protein belongs to the universal ribosomal protein uL13 family. In terms of assembly, part of the 50S ribosomal subunit. Contacts proteins L3 and L20.

Functionally, this protein is one of the early assembly proteins of the 50S ribosomal subunit. Binds to the 23S rRNA. This Deinococcus radiodurans (strain ATCC 13939 / DSM 20539 / JCM 16871 / CCUG 27074 / LMG 4051 / NBRC 15346 / NCIMB 9279 / VKM B-1422 / R1) protein is Large ribosomal subunit protein uL13 (rplM).